We begin with the raw amino-acid sequence, 193 residues long: Dense granule protein 2 (193 aa).

Residue Asn-4 is glycosylated (N-linked (GlcNAc...) asparagine). A helical membrane pass occupies residues 14 to 34; that stretch reads FSPLTVVMLAVTLVAFMGVPL. A glycan (N-linked (GlcNAc...) asparagine) is linked at Asn-74. The segment at 75 to 140 is disordered; the sequence is SSELAGSRDK…APKPVPVRSA (66 aa). The span at 88-98 shows a compositional bias: acidic residues; it reads EAEEEAAEVET. A helical membrane pass occupies residues 153–173; it reads HRVIGTAVIAAVVAALLWKFS. Residues 174-193 form a disordered region; it reads RRRSGAPREGGENENGGEEK.

It belongs to the Gra6 family.

It is found in the membrane. The polypeptide is Dense granule protein 2 (DG2) (Neospora caninum (Coccidian parasite)).